Reading from the N-terminus, the 378-residue chain is C-X-C chemokine receptor type 3-2 (378 aa).

Over 1-47 (MDNSTTAAEVSAPTDYDYNSTSYDDDNPYAAPCSLTETWNFLGRFAP) the chain is Extracellular. Residues asparagine 3 and asparagine 19 are each glycosylated (N-linked (GlcNAc...) asparagine). The helical transmembrane segment at 48-68 (VAYILVFILALVGNILVLCVI) threads the bilayer. Residues 69 to 86 (RRYRQSRHSPCSFSLTDT) are Cytoplasmic-facing. The chain crosses the membrane as a helical span at residues 87–107 (FLLHLAVSDLLLAATLPFFAV). Residues 108–121 (EWISEWVFGKVMCK) lie on the Extracellular side of the membrane. A disulfide bridge connects residues cysteine 120 and cysteine 199. The helical transmembrane segment at 122–142 (ITGALFSLNVYCGVLFLACIS) threads the bilayer. The Cytoplasmic portion of the chain corresponds to 143-164 (FDRYLAIVHAINISWRRKTCHA). Residues 165–185 (QLACAFIWVICLGLSMVDMHF) traverse the membrane as a helical segment. Over 186–212 (RDLVEIPGMNRMVCQIVYSEQYSKQWQ) the chain is Extracellular. A helical membrane pass occupies residues 213-233 (IGMQLVSMVLGFILPLLVMLY). Over 234 to 253 (CYLHIFKALCHATRRQKRRS) the chain is Cytoplasmic. A helical transmembrane segment spans residues 254–274 (LRLIISLVIVFVISWAPYNAL). Topologically, residues 275-304 (RMTDSLQMLGVIVKSCALNNVLDVGILVTE) are extracellular. Residues 305–325 (SLGLAHCALNPLLYGLVGVKF) traverse the membrane as a helical segment. Residues 326-378 (RRELAQMCKAALGPQGCLGLVGWANGRGSSTRRPTGSFSSVETENTSYFSVMA) lie on the Cytoplasmic side of the membrane.

The protein belongs to the G-protein coupled receptor 1 family.

Its subcellular location is the cell membrane. In terms of biological role, receptor for the C-X-C chemokines cxcl11.1 and cxcl11.6. Promotes macrophage chemotaxis to sites of bacterial infection. This is C-X-C chemokine receptor type 3-2 from Danio rerio (Zebrafish).